A 99-amino-acid chain; its full sequence is Mitochondrial import receptor subunit TOM9-2 (99 aa).

Residues 2–51 (AAKRIGAGKSGGGDPNILARISNSEIVSQGRRAAGDAVEVSKKLLRSTGK) lie on the Cytoplasmic side of the membrane. The helical transmembrane segment at 52–69 (AAWIAGTTFLILVVPLII) threads the bilayer. Over 70-99 (EMDREAQINEIELQQASLLGAPPSPMQRGL) the chain is Mitochondrial intermembrane.

The protein belongs to the Tom22 family. Forms part of the preprotein translocase complex of the outer mitochondrial membrane (TOM complex) which consists of at least 6 different proteins (TOM5, TOM6, TOM7, TOM20, TOM22/TOM9 and TOM40). As to expression, expressed in young cotyledons, roots, flowers and leaves.

Its subcellular location is the mitochondrion outer membrane. Functionally, central component of the receptor complex responsible for the recognition and translocation of cytosolically synthesized mitochondrial preproteins. Together with TOM20 functions as the transit peptide receptor at the surface of the mitochondrion outer membrane and facilitates the movement of preproteins into the translocation pore. This chain is Mitochondrial import receptor subunit TOM9-2 (TOM9-2), found in Arabidopsis thaliana (Mouse-ear cress).